A 234-amino-acid chain; its full sequence is Thrombin-like enzyme acutin (234 aa).

A propeptide is located at residue Met1. The Peptidase S1 domain maps to Val2–Ala225. 6 disulfide bridges follow: Cys8-Cys140, Cys27-Cys43, Cys75-Cys232, Cys119-Cys186, Cys151-Cys165, and Cys176-Cys201. Asn21 carries N-linked (GlcNAc...) asparagine glycosylation. Catalysis depends on charge relay system residues His42 and Asp87. Residue Ser180 is the Charge relay system of the active site.

Belongs to the peptidase S1 family. Snake venom subfamily. As to quaternary structure, monomer. As to expression, expressed by the venom gland.

It localises to the secreted. Functionally, thrombin-like snake venom serine protease. Has arginyl esterase and fibrinogen clotting activities. This is Thrombin-like enzyme acutin from Deinagkistrodon acutus (Hundred-pace snake).